A 211-amino-acid polypeptide reads, in one-letter code: NADH-quinone oxidoreductase subunit C (211 aa).

Belongs to the complex I 30 kDa subunit family. NDH-1 is composed of 14 different subunits. Subunits NuoB, C, D, E, F, and G constitute the peripheral sector of the complex.

It is found in the cell inner membrane. The enzyme catalyses a quinone + NADH + 5 H(+)(in) = a quinol + NAD(+) + 4 H(+)(out). NDH-1 shuttles electrons from NADH, via FMN and iron-sulfur (Fe-S) centers, to quinones in the respiratory chain. The immediate electron acceptor for the enzyme in this species is believed to be ubiquinone. Couples the redox reaction to proton translocation (for every two electrons transferred, four hydrogen ions are translocated across the cytoplasmic membrane), and thus conserves the redox energy in a proton gradient. This chain is NADH-quinone oxidoreductase subunit C, found in Azorhizobium caulinodans (strain ATCC 43989 / DSM 5975 / JCM 20966 / LMG 6465 / NBRC 14845 / NCIMB 13405 / ORS 571).